Here is a 161-residue protein sequence, read N- to C-terminus: MDFFEINLTAVVQLLNFLFLLWILNKLLYKPFLGMMEKRKEKIEGEIVEAEKLRKQAEEIKKNAEEELKNARIRAEQIIASANSESEKIVEEAKQKAQKEAEKILQNAYLEIEKQKQEALAQVQTIATELAINLAMKVLKGTLDEKAKREYLAKVIKEYEK.

The helical transmembrane segment at 10–29 (AVVQLLNFLFLLWILNKLLY) threads the bilayer.

This sequence belongs to the ATPase B chain family. F-type ATPases have 2 components, F(1) - the catalytic core - and F(0) - the membrane proton channel. F(1) has five subunits: alpha(3), beta(3), gamma(1), delta(1), epsilon(1). F(0) has three main subunits: a(1), b(2) and c(10-14). The alpha and beta chains form an alternating ring which encloses part of the gamma chain. F(1) is attached to F(0) by a central stalk formed by the gamma and epsilon chains, while a peripheral stalk is formed by the delta and b chains.

Its subcellular location is the cell inner membrane. Its function is as follows. F(1)F(0) ATP synthase produces ATP from ADP in the presence of a proton or sodium gradient. F-type ATPases consist of two structural domains, F(1) containing the extramembraneous catalytic core and F(0) containing the membrane proton channel, linked together by a central stalk and a peripheral stalk. During catalysis, ATP synthesis in the catalytic domain of F(1) is coupled via a rotary mechanism of the central stalk subunits to proton translocation. In terms of biological role, component of the F(0) channel, it forms part of the peripheral stalk, linking F(1) to F(0). The sequence is that of ATP synthase subunit b from Fervidobacterium nodosum (strain ATCC 35602 / DSM 5306 / Rt17-B1).